The chain runs to 255 residues: 5'-nucleotidase SurE (255 aa).

D8, D9, S40, and N93 together coordinate a divalent metal cation.

This sequence belongs to the SurE nucleotidase family. The cofactor is a divalent metal cation.

It localises to the cytoplasm. The enzyme catalyses a ribonucleoside 5'-phosphate + H2O = a ribonucleoside + phosphate. Its function is as follows. Nucleotidase that shows phosphatase activity on nucleoside 5'-monophosphates. The sequence is that of 5'-nucleotidase SurE from Rhodopseudomonas palustris (strain HaA2).